Here is a 372-residue protein sequence, read N- to C-terminus: Steroid C26-monooxygenase (372 aa).

Cys-314 contacts heme.

It belongs to the cytochrome P450 family. The cofactor is heme.

It carries out the reaction cholest-4-en-3-one + 6 reduced [2Fe-2S]-[ferredoxin] + 3 O2 + 5 H(+) = (25R)-3-oxocholest-4-en-26-oate + 6 oxidized [2Fe-2S]-[ferredoxin] + 4 H2O. It participates in steroid metabolism; cholesterol degradation. In terms of biological role, involved in the utilization of cholesterol as the sole carbon and energy source by degrading the side chain during infection. Primarily catalyzes the sequential oxidation of the terminal methyl of cholest-4-en-3-one into (25R)-26-hydroxycholest-4-en-3-one (alcohol), (25R)-26-oxocholest-4-en-3-one (aldehyde), to finally yield the carboxylic acid (25R)-3-oxocholest-4-en-26-oate. Also able to sequentially oxidize cholesterol itself, not only cholest-4-en-3-one. In Mycobacterium tuberculosis (strain CDC 1551 / Oshkosh), this protein is Steroid C26-monooxygenase (cyp142).